The following is a 398-amino-acid chain: Acetate kinase (398 aa).

Residue Asn-10 coordinates Mg(2+). Lys-17 contacts ATP. Substrate is bound at residue Arg-91. The active-site Proton donor/acceptor is Asp-148. ATP contacts are provided by residues 208–212 (HLGNG), 283–285 (DCR), and 331–335 (GIGEN). Residue Glu-385 coordinates Mg(2+).

This sequence belongs to the acetokinase family. In terms of assembly, homodimer. Mg(2+) is required as a cofactor. It depends on Mn(2+) as a cofactor.

The protein resides in the cytoplasm. The enzyme catalyses acetate + ATP = acetyl phosphate + ADP. It participates in metabolic intermediate biosynthesis; acetyl-CoA biosynthesis; acetyl-CoA from acetate: step 1/2. Its function is as follows. Catalyzes the formation of acetyl phosphate from acetate and ATP. Can also catalyze the reverse reaction. The chain is Acetate kinase from Shewanella woodyi (strain ATCC 51908 / MS32).